Here is a 421-residue protein sequence, read N- to C-terminus: Serine hydroxymethyltransferase (421 aa).

(6S)-5,6,7,8-tetrahydrofolate is bound by residues Leu-123 and 127-129 (GHL). Lys-232 bears the N6-(pyridoxal phosphate)lysine mark.

This sequence belongs to the SHMT family. As to quaternary structure, homodimer. Requires pyridoxal 5'-phosphate as cofactor.

It is found in the cytoplasm. The catalysed reaction is (6R)-5,10-methylene-5,6,7,8-tetrahydrofolate + glycine + H2O = (6S)-5,6,7,8-tetrahydrofolate + L-serine. It participates in one-carbon metabolism; tetrahydrofolate interconversion. The protein operates within amino-acid biosynthesis; glycine biosynthesis; glycine from L-serine: step 1/1. Catalyzes the reversible interconversion of serine and glycine with tetrahydrofolate (THF) serving as the one-carbon carrier. This reaction serves as the major source of one-carbon groups required for the biosynthesis of purines, thymidylate, methionine, and other important biomolecules. Also exhibits THF-independent aldolase activity toward beta-hydroxyamino acids, producing glycine and aldehydes, via a retro-aldol mechanism. The protein is Serine hydroxymethyltransferase of Ehrlichia canis (strain Jake).